Consider the following 325-residue polypeptide: Chain length determinant protein (325 aa).

Residues 1–31 (MRVENNNVSGQNHDPEQIDLIDLLVQLWRGK) lie on the Cytoplasmic side of the membrane. Residues 32-52 (MTIIISVIVAIALAIGYLAVA) traverse the membrane as a helical segment. Over 53-294 (KEKWTSTAII…LPIRRDSPKK (242 aa)) the chain is Periplasmic. A helical membrane pass occupies residues 295–315 (AITLILAVLLGGMVGAGIVLG). The Cytoplasmic segment spans residues 316–325 (RNALRNYNAK).

This sequence belongs to the WzzB/Cld/Rol family.

The protein resides in the cell inner membrane. Its pathway is bacterial outer membrane biogenesis; lipopolysaccharide biosynthesis. Functionally, confers a modal distribution of chain length on the O-antigen component of lipopolysaccharide (LPS). Gives rise to a reduced number of short chain molecules and increases in numbers of longer molecules, with a modal value of 13 (in strain O111/M92) and of 17 (in strain K12). The sequence is that of Chain length determinant protein (wzzB) from Escherichia coli.